The chain runs to 48 residues: uncharacterized protein (48 aa).

The protein localises to the mitochondrion. This is an uncharacterized protein from Emericella nidulans (Aspergillus nidulans).